The following is a 568-amino-acid chain: ATP-dependent RNA helicase MRH4, mitochondrial (568 aa).

The transit peptide at 1–50 (MVSILAIRTFNPLGHFVSTQCVRAYAINSVRAGSKSSSVRAGSKNDTTRA) directs the protein to the mitochondrion. Over residues 36–49 (SSSVRAGSKNDTTR) the composition is skewed to polar residues. Positions 36 to 64 (SSSVRAGSKNDTTRASSKKNKAGKSKLQL) are disordered. The short motif at 143 to 150 (EIHPSPIQ) is the Q motif element. The Helicase ATP-binding domain maps to 160–348 (NLMEPKLQVH…TKMFPNAIPL (189 aa)). 173–180 (AETGSGKT) contributes to the ATP binding site. The short motif at 296–299 (DEAD) is the DEAD box element. Positions 379–568 (ALAQTLYAIA…TILKKNKALT (190 aa)) constitute a Helicase C-terminal domain.

This sequence belongs to the DEAD box helicase family. MRH4 subfamily.

It is found in the mitochondrion. It catalyses the reaction ATP + H2O = ADP + phosphate + H(+). In terms of biological role, ATP-binding RNA helicase involved in mitochondrial RNA metabolism. Required for maintenance of mitochondrial DNA. This is ATP-dependent RNA helicase MRH4, mitochondrial (MRH4) from Candida glabrata (strain ATCC 2001 / BCRC 20586 / JCM 3761 / NBRC 0622 / NRRL Y-65 / CBS 138) (Yeast).